We begin with the raw amino-acid sequence, 963 residues long: Transcription factor cbf12 (963 aa).

2 disordered regions span residues 130-207 (NPSN…SQGL) and 248-289 (VNMN…PPQK). Composition is skewed to polar residues over residues 143–207 (FENN…SQGL) and 249–289 (NMNS…PPQK).

The protein belongs to the Su(H) family.

The protein resides in the nucleus. Functionally, transcription factor which function may be to trigger the increase of adhesion at stationary phase, possibly by counteracting or replacing cbf11 at the respective promoters. May also play a cbf11-antagonistic role in the regulation of a number of other important processes such as extracellular material production, colony morphogenesis, ploidy maintenance, or meiosis. This chain is Transcription factor cbf12 (cbf12), found in Schizosaccharomyces pombe (strain 972 / ATCC 24843) (Fission yeast).